Consider the following 181-residue polypeptide: Peptidyl-tRNA hydrolase (181 aa).

Tyrosine 14 serves as a coordination point for tRNA. The active-site Proton acceptor is the histidine 19. TRNA is bound by residues tyrosine 62, asparagine 64, and asparagine 108.

It belongs to the PTH family. As to quaternary structure, monomer.

It is found in the cytoplasm. It catalyses the reaction an N-acyl-L-alpha-aminoacyl-tRNA + H2O = an N-acyl-L-amino acid + a tRNA + H(+). Functionally, hydrolyzes ribosome-free peptidyl-tRNAs (with 1 or more amino acids incorporated), which drop off the ribosome during protein synthesis, or as a result of ribosome stalling. Catalyzes the release of premature peptidyl moieties from peptidyl-tRNA molecules trapped in stalled 50S ribosomal subunits, and thus maintains levels of free tRNAs and 50S ribosomes. This chain is Peptidyl-tRNA hydrolase, found in Campylobacter jejuni subsp. doylei (strain ATCC BAA-1458 / RM4099 / 269.97).